We begin with the raw amino-acid sequence, 344 residues long: Phosphoribosylformylglycinamidine cyclo-ligase (344 aa).

It belongs to the AIR synthase family.

The protein localises to the cytoplasm. It catalyses the reaction 2-formamido-N(1)-(5-O-phospho-beta-D-ribosyl)acetamidine + ATP = 5-amino-1-(5-phospho-beta-D-ribosyl)imidazole + ADP + phosphate + H(+). It functions in the pathway purine metabolism; IMP biosynthesis via de novo pathway; 5-amino-1-(5-phospho-D-ribosyl)imidazole from N(2)-formyl-N(1)-(5-phospho-D-ribosyl)glycinamide: step 2/2. The protein is Phosphoribosylformylglycinamidine cyclo-ligase of Exiguobacterium sp. (strain ATCC BAA-1283 / AT1b).